Here is a 506-residue protein sequence, read N- to C-terminus: Galactose/methyl galactoside import ATP-binding protein MglA (506 aa).

ABC transporter domains follow at residues 14-249 (LEMS…VGRS) and 264-506 (VILE…SLHL). Residue 46–53 (GENGAGKS) participates in ATP binding.

Belongs to the ABC transporter superfamily. Galactose/methyl galactoside importer (TC 3.A.1.2.3) family. In terms of assembly, the complex is composed of one ATP-binding protein (MglA), two transmembrane proteins (MglC) and a solute-binding protein (MglB).

It localises to the cell inner membrane. It carries out the reaction D-galactose(out) + ATP + H2O = D-galactose(in) + ADP + phosphate + H(+). The catalysed reaction is methyl beta-D-galactoside(out) + ATP + H2O = methyl beta-D-galactoside(in) + ADP + phosphate + H(+). Functionally, part of the ABC transporter complex MglABC involved in galactose/methyl galactoside import. Responsible for energy coupling to the transport system. This is Galactose/methyl galactoside import ATP-binding protein MglA from Shigella flexneri serotype 5b (strain 8401).